Here is a 524-residue protein sequence, read N- to C-terminus: Excitatory amino acid transporter 3 (524 aa).

At 1-18 (MGKPARKGCDWKRFLRNN) the chain is on the cytoplasmic side. The chain crosses the membrane as a helical span at residues 19–38 (WLLLSTVVAVVLGIVIGVLV). The Extracellular portion of the chain corresponds to 39–61 (REYSKLSNLEKFYFSFPGEILMR). Residues 62–82 (MLKLVILPLIVSSMITGVATL) form a helical membrane-spanning segment. At 83-93 (DSNVSGKIGLR) the chain is on the cytoplasmic side. A helical membrane pass occupies residues 94 to 114 (AVVYYFCTTLIAVILGIVLVV). Na(+) is bound by residues Y98, T101, and T102. Over 115-205 (SIKPGVTQKV…KTKEYKVVGM (91 aa)) the chain is Extracellular. Residues N178 and N195 are each glycosylated (N-linked (GlcNAc...) asparagine). The chain crosses the membrane as a helical span at residues 206–229 (YSDGINVLGLIVFCLVLGIVIGRK). Residues 230–238 (WEKGQILVD) are Cytoplasmic-facing. The helical transmembrane segment at 239-266 (FFNALSDATMKIVQIIMCYMPIGILFLI) threads the bilayer. At 267–286 (AGKIIEVEDWEIFRKLGLYM) the chain is on the extracellular side. Residues 287–308 (ATVLSGLAIHSIVILPLIYFII) form a helical membrane-spanning segment. Topologically, residues 309 to 313 (VRKNP) are cytoplasmic. Positions 314-344 (FQFAMGMAQALLTALMISSSSATLPVTFRCA) form an intramembrane region, discontinuously helical. S331 and S333 together coordinate L-aspartate. Topologically, residues 345–353 (EEKNRVDKR) are cytoplasmic. The chain crosses the membrane as a helical span at residues 354–380 (ITRFVLPVGATINMDGTALYEAVAAVF). Na(+) is bound by residues G362, T364, N366, and D368. Position 370 (T370) interacts with L-aspartate. Topologically, residues 381-393 (IAQLNDLDLSVGQ) are extracellular. The discontinuously helical intramembrane region spans 394 to 427 (IITISVTATAASIGAAGVPQPGLVTMVIVLSAVG). Residues S405, I406, and A408 each contribute to the Na(+) site. Residue V411 participates in L-aspartate binding. Residues 428–440 (LPAEDVTLIIAVD) lie on the Extracellular side of the membrane. The helical transmembrane segment at 441-462 (WLLDRFRTMVNVLGDAFGTGIV) threads the bilayer. 3 residues coordinate L-aspartate: R447, T448, and N451. Na(+) is bound by residues N451 and D455. Topologically, residues 463 to 524 (EKLSKKELEQ…TISFTQTSQF (62 aa)) are cytoplasmic. Residues S517 and S522 each carry the phosphoserine modification.

Belongs to the dicarboxylate/amino acid:cation symporter (DAACS) (TC 2.A.23) family. SLC1A1 subfamily. Homotrimer. Interacts with ARL6IP5. Interacts with RTN2 (via N-terminus); the interaction promotes cell surface expression of SLC1A1. Interacts with SORCS2; this interaction is important for normal expression at the cell membrane.

It is found in the cell membrane. The protein localises to the apical cell membrane. The protein resides in the synapse. Its subcellular location is the synaptosome. It localises to the early endosome membrane. It is found in the late endosome membrane. The protein localises to the recycling endosome membrane. The catalysed reaction is K(+)(in) + L-glutamate(out) + 3 Na(+)(out) + H(+)(out) = K(+)(out) + L-glutamate(in) + 3 Na(+)(in) + H(+)(in). It carries out the reaction K(+)(in) + L-aspartate(out) + 3 Na(+)(out) + H(+)(out) = K(+)(out) + L-aspartate(in) + 3 Na(+)(in) + H(+)(in). The enzyme catalyses D-aspartate(out) + K(+)(in) + 3 Na(+)(out) + H(+)(out) = D-aspartate(in) + K(+)(out) + 3 Na(+)(in) + H(+)(in). It catalyses the reaction K(+)(in) + L-cysteine(out) + 3 Na(+)(out) + H(+)(out) = K(+)(out) + L-cysteine(in) + 3 Na(+)(in) + H(+)(in). Its function is as follows. Sodium-dependent, high-affinity amino acid transporter that mediates the uptake of L-glutamate and also L-aspartate and D-aspartate. Can also transport L-cysteine. Functions as a symporter that transports one amino acid molecule together with two or three Na(+) ions and one proton, in parallel with the counter-transport of one K(+) ion. Mediates Cl(-) flux that is not coupled to amino acid transport; this avoids the accumulation of negative charges due to aspartate and Na(+) symport. Plays an important role in L-glutamate and L-aspartate reabsorption in renal tubuli. Plays a redundant role in the rapid removal of released glutamate from the synaptic cleft, which is essential for terminating the postsynaptic action of glutamate. Contributes to glutathione biosynthesis and protection against oxidative stress via its role in L-glutamate and L-cysteine transport. Negatively regulated by ARL6IP5. This chain is Excitatory amino acid transporter 3 (SLC1A1), found in Bos taurus (Bovine).